The primary structure comprises 269 residues: 5'-nucleotidase SurE (269 aa).

Positions 11, 12, 43, and 101 each coordinate a divalent metal cation.

It belongs to the SurE nucleotidase family. A divalent metal cation is required as a cofactor.

Its subcellular location is the cytoplasm. It catalyses the reaction a ribonucleoside 5'-phosphate + H2O = a ribonucleoside + phosphate. In terms of biological role, nucleotidase that shows phosphatase activity on nucleoside 5'-monophosphates. This chain is 5'-nucleotidase SurE, found in Prochlorococcus marinus (strain MIT 9515).